Consider the following 406-residue polypeptide: Arginine biosynthesis bifunctional protein ArgJ (406 aa).

6 residues coordinate substrate: threonine 152, lysine 179, threonine 190, glutamate 277, asparagine 401, and serine 406. Threonine 190 (nucleophile) is an active-site residue.

The protein belongs to the ArgJ family. In terms of assembly, heterotetramer of two alpha and two beta chains.

The protein localises to the cytoplasm. It carries out the reaction N(2)-acetyl-L-ornithine + L-glutamate = N-acetyl-L-glutamate + L-ornithine. The catalysed reaction is L-glutamate + acetyl-CoA = N-acetyl-L-glutamate + CoA + H(+). It functions in the pathway amino-acid biosynthesis; L-arginine biosynthesis; L-ornithine and N-acetyl-L-glutamate from L-glutamate and N(2)-acetyl-L-ornithine (cyclic): step 1/1. It participates in amino-acid biosynthesis; L-arginine biosynthesis; N(2)-acetyl-L-ornithine from L-glutamate: step 1/4. Functionally, catalyzes two activities which are involved in the cyclic version of arginine biosynthesis: the synthesis of N-acetylglutamate from glutamate and acetyl-CoA as the acetyl donor, and of ornithine by transacetylation between N(2)-acetylornithine and glutamate. This is Arginine biosynthesis bifunctional protein ArgJ from Neisseria gonorrhoeae (strain ATCC 700825 / FA 1090).